Here is a 5101-residue protein sequence, read N- to C-terminus: Malformin synthetase mlfA (5101 aa).

The adenylation 1 stretch occupies residues 225-616 (ERHAANRPHS…CGRADTQVKL (392 aa)). Positions 757–830 (SRLEQKIQLA…EAASLAEVQE (74 aa)) constitute a Carrier 1 domain. O-(pantetheine 4'-phosphoryl)serine is present on Ser791. Residues 868 to 1299 (EDVFPCTTMQ…ALNTLSLLQA (432 aa)) form a condensation 1 region. Residues 1327–1716 (DRWVTRQPEG…GRKDTQVKLR (390 aa)) form an adenylation 2 region. The region spanning 1854-1931 (TPTLELERTL…QLAAEVGEPA (78 aa)) is the Carrier 2 domain. The residue at position 1891 (Ser1891) is an O-(pantetheine 4'-phosphoryl)serine. Disordered stretches follow at residues 1932–1961 (GQSA…DGVD) and 1994–2020 (GGSS…KKNA). Composition is skewed to low complexity over residues 1934 to 1958 (SASS…STND) and 1996 to 2013 (SSSN…SSSS). Residues 2066-2481 (EDIYPATALQ…AVSCSDKETL (416 aa)) form a condensation 2 region. Residues 2504–2896 (RRTPHAPAVC…IGRRDGQLKL (393 aa)) form an adenylation 3 region. The Carrier 3 domain maps to 3032-3108 (RPVTSQEHEM…QLICHLNTIR (77 aa)). Ser3069 bears the O-(pantetheine 4'-phosphoryl)serine mark. 2 condensation regions span residues 3125 to 3590 (WVAL…TYDQ) and 3611 to 4030 (NIYP…EHLV). Positions 4055–4445 (HNSRQAVCAW…VGRKDNQIKF (391 aa)) are adenylation 4. The Carrier 4 domain maps to 4579-4655 (MPSTAAERKM…DLSDQAKSLI (77 aa)). Ser4616 carries the post-translational modification O-(pantetheine 4'-phosphoryl)serine. Residues 4712–5097 (IVVDIPGPID…KIVGLLRHPE (386 aa)) are condensation 5.

This sequence belongs to the NRP synthetase family.

Its pathway is secondary metabolite biosynthesis. In terms of biological role, nonribosomal peptide synthetase; part of the gene cluster that mediates the biosynthesis of malformins, cyclic pentapeptides with a disulfide bond between 2 consecutive cysteins, that show potential anti-tumor as well as antimalarial and antitrypanosomal properties. The nonribosomal peptide synthetase mlfA is responsible of the formation of the cyclic pentapeptide. The malformin biosynthesis clusters in malformin-producing fungi also contain enzymes involved in the formation of the disulfide bond between the two consecutive cysteins within malformins, in addition to additional tailoring enzymes such as methyltransferases or oxidoreductases. They are also composed of up to 4 major facilitator superfamily transporters, and transcription factors probably involved in the regulation of the expression of those clusters. The protein is Malformin synthetase mlfA of Aspergillus kawachii (strain NBRC 4308) (White koji mold).